Here is a 224-residue protein sequence, read N- to C-terminus: 3-dehydroquinate dehydratase (224 aa).

Residues Glu35–Arg37 and Arg65 each bind 3-dehydroquinate. His120 serves as the catalytic Proton donor/acceptor. Catalysis depends on Lys146, which acts as the Schiff-base intermediate with substrate. 3-dehydroquinate contacts are provided by Arg183, Thr202, and Gln206.

This sequence belongs to the type-I 3-dehydroquinase family. As to quaternary structure, homodimer.

The enzyme catalyses 3-dehydroquinate = 3-dehydroshikimate + H2O. It participates in metabolic intermediate biosynthesis; chorismate biosynthesis; chorismate from D-erythrose 4-phosphate and phosphoenolpyruvate: step 3/7. In terms of biological role, involved in the third step of the chorismate pathway, which leads to the biosynthesis of aromatic amino acids. Catalyzes the cis-dehydration of 3-dehydroquinate (DHQ) and introduces the first double bond of the aromatic ring to yield 3-dehydroshikimate. This is 3-dehydroquinate dehydratase from Methanobrevibacter smithii (strain ATCC 35061 / DSM 861 / OCM 144 / PS).